We begin with the raw amino-acid sequence, 38 residues long: MNLKKYLSTAPVVATLWLFLTAGILIELNRFFPDSLFY.

Residues 6–26 (YLSTAPVVATLWLFLTAGILI) traverse the membrane as a helical segment.

The protein belongs to the PsaJ family.

It is found in the plastid. It localises to the chloroplast thylakoid membrane. May help in the organization of the PsaE and PsaF subunits. The polypeptide is Photosystem I reaction center subunit IX (Cyanidioschyzon merolae (strain NIES-3377 / 10D) (Unicellular red alga)).